Here is an 848-residue protein sequence, read N- to C-terminus: Coiled-coil and C2 domain-containing protein 1B (848 aa).

A compositionally biased stretch (basic residues) spans 1–10 (MPGPRPRKGP). 2 disordered regions span residues 1-21 (MPGPRPRKGPKTSGQGAETAK) and 53-75 (ALTGETASRSRKPAPKGQAPLPM). Positions 165–193 (LQALLEERIRNYREAAASAKEAGEAAKAR) form a coiled coil. Disordered stretches follow at residues 217–276 (EDEI…DPDP), 326–353 (VDLSGMPPAPADLKALPQASKASSATQG), 433–460 (DFAELPVPPGFPPIPGLEPRKGSEQDSV), and 476–523 (ALVD…SPSV). Over residues 438 to 448 (PVPPGFPPIPG) the composition is skewed to pro residues. S455 carries the post-translational modification Phosphoserine. The segment covering 476–485 (ALVDDDEESD) has biased composition (acidic residues). Composition is skewed to low complexity over residues 487-498 (PAQAPLAKKPAQ) and 509-522 (EPKASSSKESLSPS). At S583 the chain carries Phosphoserine. Residue T586 is modified to Phosphothreonine. Positions 600-626 (LRLSQKAEEVYAQLQKMLQEQQAKCLL) form a coiled coil. The C2 domain occupies 666-805 (DPPSHHFELK…EKECEIREIM (140 aa)).

This sequence belongs to the CC2D1 family. Interacts with CHMP4B.

It localises to the nucleus. In terms of biological role, transcription factor that binds specifically to the DRE (dual repressor element) and represses HTR1A gene transcription in neuronal cells. In Mus musculus (Mouse), this protein is Coiled-coil and C2 domain-containing protein 1B (Cc2d1b).